We begin with the raw amino-acid sequence, 360 residues long: UPF0324 membrane protein plu2856 (360 aa).

A run of 9 helical transmembrane segments spans residues 20-42, 47-69, 104-126, 136-155, 167-189, 239-256, 277-299, 304-326, and 333-355; these read LIPG…NIPW, GLGT…YPLL, VGIT…AIWL, QTVI…AIMA, VAVA…PWFY, MIRV…SRYI, WFAV…AAIV, NIDT…VSAI, and PILL…NLGI.

The protein belongs to the UPF0324 family.

It localises to the cell membrane. In Photorhabdus laumondii subsp. laumondii (strain DSM 15139 / CIP 105565 / TT01) (Photorhabdus luminescens subsp. laumondii), this protein is UPF0324 membrane protein plu2856.